Reading from the N-terminus, the 671-residue chain is Solute carrier family 53 member 1 (671 aa).

The important for promoting lysosomal/autophagosomal degradation of PXo bodies following inorganic phosphate (Pi) starvation stretch occupies residues 1 to 193 (MKFAEHLTAH…DIDRLIQETE (193 aa)). Residues 1–228 (MKFAEHLTAH…EQQSPWTTFK (228 aa)) lie on the Cytoplasmic side of the membrane. One can recognise an SPX domain in the interval 2–218 (KFAEHLTAHI…MKRLRVPPLG (217 aa)). The important for inositol polyphosphate binding stretch occupies residues 152-159 (KILKKHDK). The chain crosses the membrane as a helical span at residues 229 to 253 (VGLFSGAFVVLFITVVIAAMFYGFG). Residues 254-255 (EN) lie on the Extracellular side of the membrane. The helical transmembrane segment at 256–287 (WRAGMRMFRAPFLIIECLFLWGVNVYGWRSSG) threads the bilayer. The Cytoplasmic portion of the chain corresponds to 288 to 300 (VNHVLIFELDPRN). The helical transmembrane segment at 301-328 (HLSEQNIMEVASVFGVIWACCVLSYIFC) threads the bilayer. The Extracellular segment spans residues 329–334 (DPLGIP). Residues 335–356 (QYAAPLCLYTLMAAFLLNPTKT) traverse the membrane as a helical segment. The segment at residues 357–374 (FHHEARFWAIRILIRVIM) is an intramembrane region (helical). At 375–379 (APFCF) the chain is on the cytoplasmic side. The discontinuously helical transmembrane segment at 380 to 413 (VNFADFWLADQLNSMVPAFLDIPFLICFFGRSPT) threads the bilayer. Phosphate contacts are provided by D389 and N392. The Extracellular portion of the chain corresponds to 414-415 (WH). The chain crosses the membrane as a discontinuously helical span at residues 416–455 (KAGKAASHCVEYVSLLHPIVAIMPAYFRFAQCIRRYRDTK). One can recognise an EXS domain in the interval 423–627 (HCVEYVSLLH…DCSDQTTILR (205 aa)). A topological domain (cytoplasmic) is located at residue E456. Residues 457 to 488 (SFPHLVNAAKYATSFFVVIFAHKYHTTTDTYP) traverse the membrane as a helical segment. Phosphate-binding residues include K466 and Y467. Residues 489–491 (LSK) lie on the Extracellular side of the membrane. A helical membrane pass occupies residues 492–519 (ENPWFYCWITAAIFSSCYAYTWDIKMDW). The Cytoplasmic portion of the chain corresponds to 520–538 (GLFDSKAGDNRFLREEIVY). The discontinuously helical transmembrane segment at 539–570 (SSTWFYYFGIIEDLILRFSWTLSMSLIEAGYI) threads the bilayer. Positions 555, 586, and 587 each coordinate phosphate. Residues 571–609 (EGDVMMTILSPLEVFRRFIWNYFRLENEHLNNVGKFRAV) traverse the membrane as a helical segment. Residues 610–671 (RDISVAPMDC…QGESIEDLCS (62 aa)) lie on the Cytoplasmic side of the membrane.

The protein belongs to the SYG1 (TC 2.A.94) family. As to quaternary structure, homodimer. Interacts with the FAR/SIN/STRIPAK complex members Cka and Pp2A-29B. In terms of tissue distribution, detected in PXo bodies found in the enterocytes and progenitors of the midgut and in the hindgut, but rarely occur in the Malpighian tubules, crop, brain, muscles and germlines (at protein level).

Its subcellular location is the membrane. The enzyme catalyses phosphate(in) = phosphate(out). Functionally, inorganic ion transporter that mediates phosphate ion export across the cell membrane. Plays a major role in phosphate homeostasis, preventing intracellular phosphate accumulation and possible calcium phosphate precipitation, ultimately preserving calcium signaling. Binds inositol hexakisphosphate (Ins6P) and similar inositol polyphosphates, such as 5-diphospho-inositol pentakisphosphate (5-InsP7), which are important intracellular signaling molecules involved in regulation of phosphate flux. In enterocytes and differentiating progenitors of the gut, promotes the biogenesis and maintenance of organelles called PXo bodies that store intracellular inorganic phosphate (Pi), and also regulates Cka-JNK mediated tissue homeostasis in response to Pi availability in these tissues. Under conditions of adequate Pi, transports Pi into PXo bodies which convert and store the Pi in the form of phospholipids. It also inhibits Cka at the post-transcriptional level to prevent Cka-bsk/JNK mediated cell proliferation. Upon Pi starvation, Pxo expression is down-regulated resulting in the PXo bodies decreasing in phospholipid content until they undergo lysosomal/autophagosomal degradation and release the stored Pi back into the cytosol for use by the cell. Decrease in Pxo expression also activates the Cka protein, which moves to the nucleus to activate bsk/JNK which then induces nearby progenitor cells to proliferate and form new absorptive cells, probably helping the organism to cope with the nutrient deficiency by maximizing absorption of dietary Pi. In Drosophila melanogaster (Fruit fly), this protein is Solute carrier family 53 member 1.